A 715-amino-acid chain; its full sequence is Methionine--tRNA ligase (715 aa).

A 'HIGH' region motif is present at residues 17–27 (PYANGPIHLGH). The Zn(2+) site is built by C148, C151, C161, and C164. Residues 359 to 363 (KMSKS) carry the 'KMSKS' region motif. K362 serves as a coordination point for ATP. In terms of domain architecture, tRNA-binding spans 614–715 (DLSKVELRVG…KDAKPGDRLK (102 aa)).

The protein belongs to the class-I aminoacyl-tRNA synthetase family. MetG type 1 subfamily. In terms of assembly, homodimer. Zn(2+) is required as a cofactor.

Its subcellular location is the cytoplasm. The catalysed reaction is tRNA(Met) + L-methionine + ATP = L-methionyl-tRNA(Met) + AMP + diphosphate. Its function is as follows. Is required not only for elongation of protein synthesis but also for the initiation of all mRNA translation through initiator tRNA(fMet) aminoacylation. The chain is Methionine--tRNA ligase from Leptospira interrogans serogroup Icterohaemorrhagiae serovar Lai (strain 56601).